We begin with the raw amino-acid sequence, 214 residues long: Probable transaldolase (214 aa).

Lysine 83 (schiff-base intermediate with substrate) is an active-site residue.

The protein belongs to the transaldolase family. Type 3B subfamily.

Its subcellular location is the cytoplasm. The enzyme catalyses D-sedoheptulose 7-phosphate + D-glyceraldehyde 3-phosphate = D-erythrose 4-phosphate + beta-D-fructose 6-phosphate. The protein operates within carbohydrate degradation; pentose phosphate pathway; D-glyceraldehyde 3-phosphate and beta-D-fructose 6-phosphate from D-ribose 5-phosphate and D-xylulose 5-phosphate (non-oxidative stage): step 2/3. Functionally, transaldolase is important for the balance of metabolites in the pentose-phosphate pathway. This chain is Probable transaldolase, found in Carboxydothermus hydrogenoformans (strain ATCC BAA-161 / DSM 6008 / Z-2901).